The following is a 1135-amino-acid chain: Large proline-rich protein bag6-A (1135 aa).

The 76-residue stretch at 7-82 (MEVTVKTLDS…HLVERAPPQT (76 aa)) folds into the Ubiquitin-like domain. Disordered regions lie at residues 76 to 114 (ERAP…RNGN), 194 to 238 (EQAA…SPSE), 350 to 407 (TGNG…PHPR), 498 to 522 (SFQF…VPGA), 552 to 612 (QGGS…QHLS), 661 to 698 (PVST…ESLP), 1075 to 1099 (KATG…EAQG), and 1116 to 1135 (NESY…RGDP). Low complexity predominate over residues 79–100 (PPQTQPSTGGPSTSSSTSPTSS). A compositionally biased stretch (polar residues) spans 212–227 (RETLPQTTQNTDGQSN). Residues 228 to 237 (TTPTSHPSPS) are compositionally biased toward low complexity. The segment covering 367 to 387 (QPPSTNTSEPQRPNTENQPPS) has biased composition (polar residues). 2 stretches are compositionally biased toward low complexity: residues 555–600 (SSTS…SVPS) and 663–672 (STAPTQSASQ). A compositionally biased stretch (pro residues) spans 673-692 (APPPSSPPPPPAHSSPPPAA). Positions 1087–1099 (CVRRELDNSEAQG) are enriched in basic and acidic residues. The span at 1116-1129 (NESYSAQRFPNTQR) shows a compositional bias: polar residues.

As to quaternary structure, component of the bag6/bat3 complex.

Its subcellular location is the cytoplasm. It is found in the cytosol. The protein localises to the nucleus. It localises to the secreted. The protein resides in the extracellular exosome. ATP-independent molecular chaperone preventing the aggregation of misfolded and hydrophobic patches-containing proteins. Functions as part of a cytosolic protein quality control complex, the bag6/bat3 complex, which maintains these client proteins in a soluble state and participates in their proper delivery to the endoplasmic reticulum or alternatively can promote their sorting to the proteasome where they undergo degradation. The bag6/bat3 complex is involved in the post-translational delivery of tail-anchored/type II transmembrane proteins to the endoplasmic reticulum membrane. Similarly, the bag6/bat3 complex also functions as a sorting platform for proteins of the secretory pathway that are mislocalized to the cytosol either delivering them to the proteasome for degradation or to the endoplasmic reticulum. The bag6/bat3 complex also plays a role in the endoplasmic reticulum-associated degradation (ERAD), a quality control mechanism that eliminates unwanted proteins of the endoplasmic reticulum through their retrotranslocation to the cytosol and their targeting to the proteasome. It maintains these retrotranslocated proteins in an unfolded yet soluble state condition in the cytosol to ensure their proper delivery to the proteasome. Also required for selective ubiquitin-mediated degradation of defective nascent chain polypeptides by the proteasome. Also involved in endoplasmic reticulum stress-induced pre-emptive quality control, a mechanism that selectively attenuates the translocation of newly synthesized proteins into the endoplasmic reticulum and reroutes them to the cytosol for proteasomal degradation. May ensure the proper degradation of these proteins and thereby protects the endoplasmic reticulum from protein overload upon stress. By stabilizing a large spectrum of proteins, may indirectly affect different biological processes including apoptosis. By controlling the steady-state expression of the IGF1R receptor, indirectly regulates the insulin-like growth factor receptor signaling pathway. In terms of biological role, when nuclear, may also act as a component of some chromatin regulator complex. The sequence is that of Large proline-rich protein bag6-A from Xenopus laevis (African clawed frog).